Consider the following 1102-residue polypeptide: PAN2-PAN3 deadenylation complex catalytic subunit PAN2 (1102 aa).

WD repeat units lie at residues 20–59, 104–144, and 269–308; these read DYPRPATALAFDTIAELLWAGNDRGRVVSFYGRDLQRYTA, DEME…IVKQ, and NVMSFINLFEIAPSGEALAMADTECNIHLWGSPSKIHFTD. Residues 308–445 form a linker region; it reads DMAIPIEMPK…STDELESLKP (138 aa). The segment at 423–442 is disordered; it reads AVPDPKVEQVPESSTDELES. The 388-residue stretch at 446 to 833 folds into the USP domain; it reads EAPPIYRNLE…LPAVLLFQVK (388 aa). The region spanning 881 to 1054 is the Exonuclease domain; sequence VGLDTEFVSL…EDARTALKLY (174 aa). A divalent metal cation is bound by residues aspartate 884, glutamate 886, aspartate 993, and aspartate 1046.

It belongs to the peptidase C19 family. PAN2 subfamily. Forms a heterotrimer with an asymmetric homodimer of the regulatory subunit PAN3 to form the poly(A)-nuclease (PAN) deadenylation complex. Requires a divalent metal cation as cofactor.

The protein resides in the cytoplasm. The enzyme catalyses Exonucleolytic cleavage of poly(A) to 5'-AMP.. With respect to regulation, positively regulated by the regulatory subunit PAN3. Its function is as follows. Catalytic subunit of the poly(A)-nuclease (PAN) deadenylation complex, one of two cytoplasmic mRNA deadenylases involved in mRNA turnover. PAN specifically shortens poly(A) tails of RNA and the activity is stimulated by poly(A)-binding protein PAB1. PAN deadenylation is followed by rapid degradation of the shortened mRNA tails by the CCR4-NOT complex. Deadenylated mRNAs are then degraded by two alternative mechanisms, namely exosome-mediated 3'-5' exonucleolytic degradation, or deadenylation-dependent mRNA decaping and subsequent 5'-3' exonucleolytic degradation by XRN1. May also be involved in post-transcriptional maturation of mRNA poly(A) tails. The sequence is that of PAN2-PAN3 deadenylation complex catalytic subunit PAN2 from Chaetomium globosum (strain ATCC 6205 / CBS 148.51 / DSM 1962 / NBRC 6347 / NRRL 1970) (Soil fungus).